A 350-amino-acid chain; its full sequence is Probable dual-specificity RNA methyltransferase RlmN (350 aa).

Glu-98 serves as the catalytic Proton acceptor. A Radical SAM core domain is found at 104–334 (HTYGNSVCVS…VTVRRELGGD (231 aa)). Cysteines 111 and 339 form a disulfide. Cys-118, Cys-122, and Cys-125 together coordinate [4Fe-4S] cluster. Residues 165 to 166 (GE), Ser-197, 220 to 222 (SLH), and Asn-296 contribute to the S-adenosyl-L-methionine site. The active-site S-methylcysteine intermediate is the Cys-339.

The protein belongs to the radical SAM superfamily. RlmN family. [4Fe-4S] cluster serves as cofactor.

Its subcellular location is the cytoplasm. It catalyses the reaction adenosine(2503) in 23S rRNA + 2 reduced [2Fe-2S]-[ferredoxin] + 2 S-adenosyl-L-methionine = 2-methyladenosine(2503) in 23S rRNA + 5'-deoxyadenosine + L-methionine + 2 oxidized [2Fe-2S]-[ferredoxin] + S-adenosyl-L-homocysteine. The catalysed reaction is adenosine(37) in tRNA + 2 reduced [2Fe-2S]-[ferredoxin] + 2 S-adenosyl-L-methionine = 2-methyladenosine(37) in tRNA + 5'-deoxyadenosine + L-methionine + 2 oxidized [2Fe-2S]-[ferredoxin] + S-adenosyl-L-homocysteine. Its function is as follows. Specifically methylates position 2 of adenine 2503 in 23S rRNA and position 2 of adenine 37 in tRNAs. This is Probable dual-specificity RNA methyltransferase RlmN from Desulforamulus reducens (strain ATCC BAA-1160 / DSM 100696 / MI-1) (Desulfotomaculum reducens).